The following is a 237-amino-acid chain: Derlin-2 (237 aa).

The Cytoplasmic segment spans residues 1–20 (MNGVVAALEEMPPVTRFYTG). The helical transmembrane segment at 21–41 (ACVLLTTAVHLEFVTPFHLYF) threads the bilayer. The Lumenal portion of the chain corresponds to 42 to 54 (NWELIIRKYQFWR). The chain crosses the membrane as a helical span at residues 55-75 (LITSFCFFGSFGFSFLFNMIF). Over 76–97 (TYRYCMMLEEGSFRGRRADFVY) the chain is Cytoplasmic. A helical transmembrane segment spans residues 98 to 118 (MFLFGAVLMILSGIFVQILFL). Residues 119-166 (GQAFTIMLVYIWSRRNPMIQMNFFGVLTFTAPYLPWVLLLFSLLLGNN) are Lumenal-facing. Residues 167–187 (AVVDFMGIACGHIYFFLEDVF) traverse the membrane as a helical segment. Residues 188–237 (PFQEHGKRFLKTPQWLVYLFDERRPEPLPEDERPGGFEWGDEQPEQEQHD) lie on the Cytoplasmic side of the membrane. Basic and acidic residues predominate over residues 212-222 (PEPLPEDERPG). The tract at residues 212 to 237 (PEPLPEDERPGGFEWGDEQPEQEQHD) is disordered. Over residues 226–237 (WGDEQPEQEQHD) the composition is skewed to acidic residues.

Belongs to the derlin family.

Its subcellular location is the endoplasmic reticulum membrane. In terms of biological role, may be required for the degradation process of some specific misfolded endoplasmic reticulum (ER) luminal proteins. Participates in the transfer of misfolded proteins from the ER to the cytosol, where they are destroyed by the proteasome in a ubiquitin-dependent manner. Its precise function remains unclear, but its ability to complement der1 mutations in C.cerevisiae, suggests a similar function in the degradation of ER misfolded proteins. The protein is Derlin-2 of Caenorhabditis elegans.